We begin with the raw amino-acid sequence, 500 residues long: Protein PIGMENT DEFECTIVE 338, chloroplastic (500 aa).

The N-terminal 63 residues, Met1–Arg63, are a transit peptide targeting the chloroplast. S1 motif domains lie at Lys156 to Arg265, Asn283 to Lys351, and Gly362 to Ala431.

Belongs to the bacterial ribosomal protein bS1 family. Interacts with CRP1 and PRFB3. In terms of tissue distribution, present in leaves (at protein level). Confined to leaf chlorenchyma cells.

The protein resides in the plastid. Its subcellular location is the chloroplast. Functionally, RNA-binding protein that acts as an RNA chaperone to remodel RNA structure and activates their translation. Required for seed pigmentation. Necessary for chloroplast development and subsequent photosynthetic electron flow, as well as for non-photochemical quenching (NPQ). Rubisco regulatory factor which regulates the concerted biogenesis of NDH, PSI (including PsaA, PsaB, PsaD, PsaF, PsaL, PsaG, PsaK and NdhH) and Cytb(6)f (including PetA, PetB, PetC and PetD) complexes. Binds specifically to and involved in the post-transcriptional regulation of plastid-encoded mRNAs (e.g. rbcL, petA, petB, petD and Ycf1), thus modulating expression, cellular localization/compartmentalization, and photosynthetic function. The protein is Protein PIGMENT DEFECTIVE 338, chloroplastic of Arabidopsis thaliana (Mouse-ear cress).